A 370-amino-acid chain; its full sequence is Tyrosine-protein kinase transforming protein SEA (370 aa).

One can recognise a Protein kinase domain in the interval 60-323; that stretch reads THRSRVIGRG…GLVCELERVL (264 aa). ATP is bound by residues 66–74 and lysine 92; that span reads IGRGHFGSV. The active-site Proton acceptor is the aspartate 186. At tyrosine 216 the chain carries Phosphotyrosine; by autocatalysis. The interval 345–370 is disordered; the sequence is PPFPPAPRGQLPDSEDEEDEEEEVAE. The segment covering 357–370 has biased composition (acidic residues); sequence DSEDEEDEEEEVAE.

This sequence belongs to the protein kinase superfamily. Tyr protein kinase family.

It carries out the reaction L-tyrosyl-[protein] + ATP = O-phospho-L-tyrosyl-[protein] + ADP + H(+). This Galliformes protein is Tyrosine-protein kinase transforming protein SEA (V-SEA).